Here is a 433-residue protein sequence, read N- to C-terminus: Type I acyl-CoA thioesterase mpaH' (433 aa).

The tract at residues His-58–Asp-246 is abhydrolase domain. Val-60 contacts substrate. Catalysis depends on Ser-139, which acts as the Nucleophile. Phe-140 provides a ligand contact to substrate. Residues Asp-163 and His-365 contribute to the active site.

Belongs to the AB hydrolase superfamily. MpaH hydrolase family. In terms of assembly, homodimer.

It localises to the peroxisome matrix. The catalysed reaction is mycophenolyl-CoA + H2O = mycophenolate + CoA + H(+). The protein operates within secondary metabolite biosynthesis; terpenoid biosynthesis. In terms of biological role, type I acyl-CoA thioesterase; part of the gene cluster that mediates the biosynthesis of mycophenolic acid (MPA), the first isolated antibiotic natural product in the world obtained from a culture of Penicillium brevicompactum in 1893. MpaH' acts as a peroxisomal acyl-CoA hydrolase that converts MPA-CoA into the final product MPA. The first step of the pathway is the synthesis of 5-methylorsellinic acid (5MOA) by the cytosolic polyketide synthase mpaC. 5MOA is then converted to the phthalide compound 5,7-dihydroxy-4,6-dimethylphthalide (DHMP) by the endoplasmic reticulum-bound cytochrome P450 monooxygenase mpaDE. MpaDE first catalyzes hydroxylation of 5-MOA to 4,6-dihydroxy-2-(hydroxymethyl)-3-methylbenzoic acid (DHMB). MpaDE then acts as a lactone synthase that catalyzes the ring closure to convert DHMB into DHMP. The next step is the prenylation of DHMP by the Golgi apparatus-associated prenyltransferase mpaA to yield farnesyl-DHMP (FDHMP). The ER-bound oxygenase mpaB then mediates the oxidative cleavage the C19-C20 double bond in FDHMP to yield FDHMP-3C via a mycophenolic aldehyde intermediate. The O-methyltransferase mpaG catalyzes the methylation of FDHMP-3C to yield MFDHMP-3C. After the cytosolic methylation of FDHMP-3C, MFDHMP-3C enters into peroxisomes probably via free diffusion due to its low molecular weight. Upon a peroxisomal CoA ligation reaction, catalyzed by a beta-oxidation component enzyme acyl-CoA ligase ACL891, MFDHMP-3C-CoA would then be restricted to peroxisomes for the following beta-oxidation pathway steps. The peroxisomal beta-oxidation machinery than converts MFDHMP-3C-CoA into MPA_CoA, via a beta-oxidation chain-shortening process. Finally mpaH acts as a peroxisomal acyl-CoA hydrolase with high substrate specificity toward MPA-CoA to release the final product MPA. The chain is Type I acyl-CoA thioesterase mpaH' from Penicillium brevicompactum.